Reading from the N-terminus, the 474-residue chain is Aspartyl/glutamyl-tRNA(Asn/Gln) amidotransferase subunit B (474 aa).

This sequence belongs to the GatB/GatE family. GatB subfamily. Heterotrimer of A, B and C subunits.

It catalyses the reaction L-glutamyl-tRNA(Gln) + L-glutamine + ATP + H2O = L-glutaminyl-tRNA(Gln) + L-glutamate + ADP + phosphate + H(+). The catalysed reaction is L-aspartyl-tRNA(Asn) + L-glutamine + ATP + H2O = L-asparaginyl-tRNA(Asn) + L-glutamate + ADP + phosphate + 2 H(+). Functionally, allows the formation of correctly charged Asn-tRNA(Asn) or Gln-tRNA(Gln) through the transamidation of misacylated Asp-tRNA(Asn) or Glu-tRNA(Gln) in organisms which lack either or both of asparaginyl-tRNA or glutaminyl-tRNA synthetases. The reaction takes place in the presence of glutamine and ATP through an activated phospho-Asp-tRNA(Asn) or phospho-Glu-tRNA(Gln). In Methanospirillum hungatei JF-1 (strain ATCC 27890 / DSM 864 / NBRC 100397 / JF-1), this protein is Aspartyl/glutamyl-tRNA(Asn/Gln) amidotransferase subunit B.